The primary structure comprises 360 residues: Actin-like protein MamK (360 aa).

ATP contacts are provided by residues Lys-22, 33–34, and Asp-89; that span reads TS. Glu-156 is a Mg(2+) binding site. Residues 177-179, 231-235, and Gly-302 contribute to the ATP site; these read AGT and KEQFS.

The protein belongs to the FtsA/MreB family. MamK subfamily. As to quaternary structure, forms cytoplasmic filaments. Interacts with MamJ. Forms filaments in the absence of other magnetosome proteins and in E.coli. Filament formation in vitro requires ATP, GTP or a non-hydrolyzable ATP analog.

Its subcellular location is the cytoplasm. It localises to the cytoskeleton. It carries out the reaction ATP + H2O = ADP + phosphate + H(+). Filament dynamics depend partially on MamJ. In terms of biological role, protein with ATPase activity which forms dynamic cytoplasmic filaments that are involved in sorting, concatenating and/or correctly positioning of magnetosomes in the cell. Not absolutely necessary for assembly of short chains. Filaments grow from the both cell poles towards midcell, and are probably disassembled at the other end of the cell, a process known as treadmilling. Polymerizes in the presence of ATP, GTP or a non-hydrolyzable ATP analog. Required for correct segregation and positioning of magnetosomes following cell division. This Magnetospirillum gryphiswaldense (strain DSM 6361 / JCM 21280 / NBRC 15271 / MSR-1) protein is Actin-like protein MamK.